We begin with the raw amino-acid sequence, 50 residues long: Parvalbumin (50 aa).

The EF-hand domain maps to 38–50; that stretch reads KTHEQVKKVFNIL.

This sequence belongs to the parvalbumin family.

Functionally, probably regulates the activity of the caudal neurosecretory system. Binds two calcium ions. This chain is Parvalbumin, found in Scyliorhinus canicula (Small-spotted catshark).